The following is a 491-amino-acid chain: Probable Xaa-Pro aminopeptidase An01g13040 (491 aa).

Residues Asp-276, Asp-287, Glu-420, and Glu-459 each contribute to the Mn(2+) site.

It belongs to the peptidase M24B family. Mn(2+) serves as cofactor.

It catalyses the reaction Release of any N-terminal amino acid, including proline, that is linked to proline, even from a dipeptide or tripeptide.. Catalyzes the removal of a penultimate prolyl residue from the N-termini of peptides. The polypeptide is Probable Xaa-Pro aminopeptidase An01g13040 (Aspergillus niger (strain ATCC MYA-4892 / CBS 513.88 / FGSC A1513)).